The chain runs to 224 residues: tRNA (guanine-N(7)-)-methyltransferase (224 aa).

Positions 54, 79, 106, and 129 each coordinate S-adenosyl-L-methionine. Residue D129 is part of the active site. Substrate contacts are provided by K133 and D165.

The protein belongs to the class I-like SAM-binding methyltransferase superfamily. TrmB family.

It carries out the reaction guanosine(46) in tRNA + S-adenosyl-L-methionine = N(7)-methylguanosine(46) in tRNA + S-adenosyl-L-homocysteine. It participates in tRNA modification; N(7)-methylguanine-tRNA biosynthesis. In terms of biological role, catalyzes the formation of N(7)-methylguanine at position 46 (m7G46) in tRNA. The protein is tRNA (guanine-N(7)-)-methyltransferase of Chlamydia trachomatis serovar D (strain ATCC VR-885 / DSM 19411 / UW-3/Cx).